The sequence spans 396 residues: Tryptophan synthase beta chain (396 aa).

An N6-(pyridoxal phosphate)lysine modification is found at Lys-88.

Belongs to the TrpB family. Tetramer of two alpha and two beta chains. The cofactor is pyridoxal 5'-phosphate.

The enzyme catalyses (1S,2R)-1-C-(indol-3-yl)glycerol 3-phosphate + L-serine = D-glyceraldehyde 3-phosphate + L-tryptophan + H2O. It participates in amino-acid biosynthesis; L-tryptophan biosynthesis; L-tryptophan from chorismate: step 5/5. The beta subunit is responsible for the synthesis of L-tryptophan from indole and L-serine. The protein is Tryptophan synthase beta chain of Actinobacillus pleuropneumoniae serotype 5b (strain L20).